A 431-amino-acid polypeptide reads, in one-letter code: Protein prenyltransferase alpha subunit repeat-containing protein 1-B (431 aa).

PFTA repeat units follow at residues 85–118 (ELID…TLNP), 120–153 (KDLQ…VQEL), 178–211 (EEMH…GNLN), 217–250 (DELS…LCKT), and 293–326 (EEMK…HQLL). The disordered stretch occupies residues 363–383 (PMDVDGMSDPNKQGYTQETKR). The stretch at 394-431 (SLDSELRFINCVLTNCCSPEQSRFAASYRKWLLSLQGY) is one PFTA 6 repeat.

The protein belongs to the protein prenyltransferase subunit alpha family.

The polypeptide is Protein prenyltransferase alpha subunit repeat-containing protein 1-B (ptar1-b) (Xenopus laevis (African clawed frog)).